The primary structure comprises 314 residues: MAATNLENQLHSAQKNLLFLQREHASTLKGLHAEIRRLQQHCTDLTYELTLKSFELTGDSSSRTTELKRRCEELEAQLKAKEEENRKLLQELEQKNAAIAVLENTVREREKKYLEELKVKSHKLSMLSGELEQRASTVAYLTSQLHAAKKKLLSSSGTSDASPAGSPALASYKPTPPKDKLPETPRRRMKKSLSAPLHPEFEEVYRFGAESRKLLLREPVDAMPDPTPFLLARESAEVQLKERPLVIPPIASDRSATGQHSPARDKPHKTHVGVAHRIHHATPSQAQPEGEMRAVDQVNASKVVRKHSGTDRTV.

2 coiled-coil regions span residues Met-1–Thr-27 and Asp-59–Tyr-113. Disordered stretches follow at residues Leu-153–Leu-193 and Ala-251–Val-314. Positions Pro-176–Arg-186 are enriched in basic and acidic residues. The residue at position 192 (Ser-192) is a Phosphoserine. Residues Lys-266–His-280 show a composition bias toward basic residues.

As to quaternary structure, interacts with CEP164. Phosphorylated at Ser-192 by TTBK2.

The protein resides in the cytoplasm. It is found in the cytoskeleton. It localises to the microtubule organizing center. The protein localises to the centrosome. Its subcellular location is the centriole. Interferon-stimulated protein that plays a role in innate immunity. This Mus musculus (Mouse) protein is Coiled-coil domain-containing protein 92 (Ccdc92).